Reading from the N-terminus, the 586-residue chain is Serine/threonine-protein phosphatase 2A 56 kDa regulatory subunit delta isoform (586 aa).

Residues 1-80 form a disordered region; sequence MSPSPSSSGK…QSSSRFNLSK (80 aa). 6 repeat units span residues 21 to 22, 23 to 24, 25 to 26, 27 to 28, 29 to 30, and 31 to 32. Positions 21-36 are 8 X 2 AA approximate tandem repeats of Q-P; that stretch reads QPQPQPQPQPQPQSQP. Over residues 23–35 the composition is skewed to pro residues; the sequence is QPQPQPQPQPQSQ. The 7; approximate repeat unit spans residues 33 to 34; the sequence is QS. Repeat unit 8 spans residues 35–36; sequence QP. Over residues 36–45 the composition is skewed to low complexity; it reads PPSSNKRPSN. T47 is subject to Phosphothreonine. Phosphoserine is present on residues S72, S73, and S74. An SH3-binding; class I motif is present at residues 507–514; the sequence is RAPPPLPP. The short motif at 532-549 is the Nuclear localization signal element; that stretch reads KRTVETEAVQMLKDIKKE. Residues S557 and S582 each carry the phosphoserine modification.

The protein belongs to the phosphatase 2A regulatory subunit B56 family. In terms of assembly, PP2A consists of a common heterodimeric core enzyme, composed of a 36 kDa catalytic subunit (subunit C) and a 65 kDa constant regulatory subunit (PR65 or subunit A), that associates with a variety of regulatory subunits. Proteins that associate with the core dimer include three families of regulatory subunits B (the R2/B/PR55/B55, R3/B''/PR72/PR130/PR59 and R5/B'/B56 families), the 48 kDa variable regulatory subunit, viral proteins, and cell signaling molecules. Interacts with the PP2A A subunit PPP2R1A. Interacts with SGO1. Interacts with ADCY8. In terms of tissue distribution, highly expressed in brain.

Its subcellular location is the nucleus. Functionally, the B regulatory subunit might modulate substrate selectivity and catalytic activity, and might also direct the localization of the catalytic enzyme to a particular subcellular compartment. In Oryctolagus cuniculus (Rabbit), this protein is Serine/threonine-protein phosphatase 2A 56 kDa regulatory subunit delta isoform (PPP2R5D).